The sequence spans 246 residues: UDP-N-acetyl-D-mannosaminuronic acid transferase (246 aa).

The protein belongs to the glycosyltransferase 26 family.

The enzyme catalyses UDP-N-acetyl-alpha-D-mannosaminouronate + N-acetyl-alpha-D-glucosaminyl-di-trans,octa-cis-undecaprenyl diphosphate = beta-D-ManNAcA-(1-&gt;4)-alpha-D-GlcNAc-di-trans,octa-cis-undecaprenyl diphosphate + UDP + H(+). Its pathway is bacterial outer membrane biogenesis; enterobacterial common antigen biosynthesis. Functionally, catalyzes the synthesis of Und-PP-GlcNAc-ManNAcA (Lipid II), the second lipid-linked intermediate involved in enterobacterial common antigen (ECA) synthesis. The protein is UDP-N-acetyl-D-mannosaminuronic acid transferase of Escherichia coli O7:K1 (strain IAI39 / ExPEC).